Here is a 201-residue protein sequence, read N- to C-terminus: Large ribosomal subunit protein uL4 (201 aa).

The disordered stretch occupies residues 46–71; that stretch reads QKTRAEVIGSGKKPWRQKGTGRARAG.

It belongs to the universal ribosomal protein uL4 family. Part of the 50S ribosomal subunit.

Its function is as follows. One of the primary rRNA binding proteins, this protein initially binds near the 5'-end of the 23S rRNA. It is important during the early stages of 50S assembly. It makes multiple contacts with different domains of the 23S rRNA in the assembled 50S subunit and ribosome. Forms part of the polypeptide exit tunnel. In Shewanella sediminis (strain HAW-EB3), this protein is Large ribosomal subunit protein uL4.